The primary structure comprises 877 residues: Alanine--tRNA ligase (877 aa).

The Zn(2+) site is built by His-564, His-568, Cys-666, and His-670.

Belongs to the class-II aminoacyl-tRNA synthetase family. Zn(2+) serves as cofactor.

The protein resides in the cytoplasm. It catalyses the reaction tRNA(Ala) + L-alanine + ATP = L-alanyl-tRNA(Ala) + AMP + diphosphate. Functionally, catalyzes the attachment of alanine to tRNA(Ala) in a two-step reaction: alanine is first activated by ATP to form Ala-AMP and then transferred to the acceptor end of tRNA(Ala). Also edits incorrectly charged Ser-tRNA(Ala) and Gly-tRNA(Ala) via its editing domain. The protein is Alanine--tRNA ligase of Pelotomaculum thermopropionicum (strain DSM 13744 / JCM 10971 / SI).